A 311-amino-acid polypeptide reads, in one-letter code: Dehydrogenase/reductase SDR family member 7C (311 aa).

A signal peptide spans 1-18 (MGFLTFLIVPLLILGISG). 41-65 (VITDAISGLGKECSRVFHSAGARLV) lines the NAD(+) pocket. Thr178 provides a ligand contact to substrate. The active-site Proton acceptor is the Tyr191.

The protein belongs to the short-chain dehydrogenases/reductases (SDR) family.

It is found in the secreted. Its function is as follows. Putative oxidoreductase. The polypeptide is Dehydrogenase/reductase SDR family member 7C (dhrs7c) (Xenopus tropicalis (Western clawed frog)).